A 288-amino-acid polypeptide reads, in one-letter code: tRNA (guanine-N(1)-)-methyltransferase (288 aa).

The segment at A82–A105 is disordered. Positions S89–A105 are enriched in low complexity. Residues G137 and I162–L167 each bind S-adenosyl-L-methionine.

The protein belongs to the RNA methyltransferase TrmD family. Homodimer.

It is found in the cytoplasm. It catalyses the reaction guanosine(37) in tRNA + S-adenosyl-L-methionine = N(1)-methylguanosine(37) in tRNA + S-adenosyl-L-homocysteine + H(+). Its function is as follows. Specifically methylates guanosine-37 in various tRNAs. In Bifidobacterium longum (strain DJO10A), this protein is tRNA (guanine-N(1)-)-methyltransferase.